Here is a 394-residue protein sequence, read N- to C-terminus: Phosphoglycerate kinase (394 aa).

Residues 21–23, Arg-36, 59–62, Arg-118, and Arg-151 each bind substrate; these read DFN and HLGR. Ser-183 is modified (phosphoserine). Positions 201 and 292 each coordinate ATP. At Thr-299 the chain carries Phosphothreonine. Residues Glu-323 and 350–353 each bind ATP; that span reads GGDS.

The protein belongs to the phosphoglycerate kinase family. In terms of assembly, monomer.

The protein localises to the cytoplasm. The catalysed reaction is (2R)-3-phosphoglycerate + ATP = (2R)-3-phospho-glyceroyl phosphate + ADP. The protein operates within carbohydrate degradation; glycolysis; pyruvate from D-glyceraldehyde 3-phosphate: step 2/5. The sequence is that of Phosphoglycerate kinase from Bacillus cereus (strain G9842).